Reading from the N-terminus, the 119-residue chain is Toxin ICK-8 (119 aa).

An N-terminal signal peptide occupies residues 1-19; that stretch reads MMKLYSLVIIATLAAAAFA. Intrachain disulfides connect Cys-59/Cys-74, Cys-67/Cys-80, Cys-71/Cys-116, and Cys-73/Cys-87.

It belongs to the neurotoxin 25 family. ICK-8 subfamily. Expressed by the venom gland.

It is found in the secreted. In terms of biological role, ion channel inhibitor. This is Toxin ICK-8 from Trittame loki (Brush-footed trapdoor spider).